We begin with the raw amino-acid sequence, 26 residues long: Delta-conotoxin Am2766 (26 aa).

Intrachain disulfides connect C1-C16, C8-C20, and C15-C24. E26 carries the post-translational modification Glutamic acid 1-amide.

As to expression, expressed by the venom duct.

It is found in the secreted. Delta-conotoxins bind to site 6 of voltage-gated sodium channels (Nav) and inhibit the inactivation process. The sequence is that of Delta-conotoxin Am2766 from Conus amadis (Amadis cone).